We begin with the raw amino-acid sequence, 192 residues long: Pyridoxal 5'-phosphate synthase subunit PdxT (192 aa).

Residue 47 to 49 (GES) coordinates L-glutamine. The active-site Nucleophile is C79. Residues R106 and 134 to 135 (IR) each bind L-glutamine. Catalysis depends on charge relay system residues H170 and E172.

This sequence belongs to the glutaminase PdxT/SNO family. In the presence of PdxS, forms a dodecamer of heterodimers. Only shows activity in the heterodimer.

It carries out the reaction aldehydo-D-ribose 5-phosphate + D-glyceraldehyde 3-phosphate + L-glutamine = pyridoxal 5'-phosphate + L-glutamate + phosphate + 3 H2O + H(+). It catalyses the reaction L-glutamine + H2O = L-glutamate + NH4(+). It participates in cofactor biosynthesis; pyridoxal 5'-phosphate biosynthesis. Functionally, catalyzes the hydrolysis of glutamine to glutamate and ammonia as part of the biosynthesis of pyridoxal 5'-phosphate. The resulting ammonia molecule is channeled to the active site of PdxS. The protein is Pyridoxal 5'-phosphate synthase subunit PdxT of Geobacillus sp. (strain WCH70).